The primary structure comprises 464 residues: MRTKTKLVLIPDRHFRRATFRKRNAGIRKKLHELTTLCDIKACAVIYSPFENPTVWPSTEGVQEVISEFMEKPATERSKTMMSHETFLRDQITKEQNKLESLRRENRETQLKHFMFDCVGGKMSEQQYGARDLQDLSLFTDQYLNQLNARKKFLTEYGESSSSVPPLFDVAGANPPVVADQAAVTVPPLFAVAGANLPVVADQAAVTVPPLFAVAGANLPVVADQAAVNVPTGFHNMNVNQNQYEPVQPYVPTGFSDHIQYQNMNFNQNQQEPVHYQALAVAGAGLPMTQNQYEPVHYQSLAVAGGGLPMSQLQYEPVQPYIPTVFSDNVQYQHMNLYQNQQEPVHYQALGVAGAGLPMNQNQYEPVQPYVPTGFSDHFQFENMNLNQNQQEPVQYQAPVDFNHQIQQGNYDMNLNQNMKHAHIPFMDGNYYNYHQPPTVGLTSTGHMPSTTTTTTNNNNNNNV.

Residues 1–60 form the MADS-box domain; the sequence is MRTKTKLVLIPDRHFRRATFRKRNAGIRKKLHELTTLCDIKACAVIYSPFENPTVWPSTE. The stretch at 85-114 forms a coiled coil; that stretch reads ETFLRDQITKEQNKLESLRRENRETQLKHF. Positions 443–464 are disordered; sequence TSTGHMPSTTTTTTNNNNNNNV. Residues 451–464 are compositionally biased toward low complexity; that stretch reads TTTTTTNNNNNNNV.

Interacts with AGL62.

The protein localises to the nucleus. Its function is as follows. Putative transcription factor. This chain is Agamous-like MADS-box protein AGL92 (AGL92), found in Arabidopsis thaliana (Mouse-ear cress).